The following is a 461-amino-acid chain: MLKVLMPTIMLILTTWLTKPAWLWPTMTTNSLLVATISLTWLKWDSESGWKSLNSSMATDPLSTPLLILTCWLLPLMILASQNHMFMEPLNRQRSFISLLISLQTFLIMAFGATEIILFYIMFEATLIPTLIIITRWGNQTERLNAGTYFLFYTVMGSLPLLVALLMTQNNLGTLSMPLIQHMYQMKLHTHGDMMWWTACLLAFLVKMPLYGVHLWLPKAHVEAPIAGSMVLAAVLLKLGGYGMMRLIMMLAPMTKTLAYPFIILALWGIIMTGSICLRQTDLKSLIAYSSVGHMGLVAAGILTQTPWGFTGATVLMIAHGLTSSALFCLANTNYERTHSRTMILARGMQVILPLMTFWWLMMNLANLALPPSTNLMGELLIITMTFNWSNWTLTMTGLGMLITAIYSLHMFLTTQRGLMTNHIISIEPSHTREHLLMTMHALPMLLLILKPELIWGWSYX.

Helical transmembrane passes span 20 to 42, 61 to 81, 93 to 113, 114 to 134, 147 to 167, 197 to 217, 225 to 245, 258 to 278, 285 to 304, 309 to 331, 351 to 371, 393 to 413, and 436 to 456; these read PAWLWPTMTTNSLLVATISLTWL, PLSTPLLILTCWLLPLMILAS, QRSFISLLISLQTFLIMAFGA, TEIILFYIMFEATLIPTLIII, GTYFLFYTVMGSLPLLVALLM, WTACLLAFLVKMPLYGVHLWL, PIAGSMVLAAVLLKLGGYGMM, LAYPFIILALWGIIMTGSICL, SLIAYSSVGHMGLVAAGILT, GFTGATVLMIAHGLTSSALFCLA, VILPLMTFWWLMMNLANLALP, TLTMTGLGMLITAIYSLHMFL, and LLMTMHALPMLLLILKPELIW.

This sequence belongs to the complex I subunit 4 family.

Its subcellular location is the mitochondrion membrane. It catalyses the reaction a ubiquinone + NADH + 5 H(+)(in) = a ubiquinol + NAD(+) + 4 H(+)(out). Core subunit of the mitochondrial membrane respiratory chain NADH dehydrogenase (Complex I) that is believed to belong to the minimal assembly required for catalysis. Complex I functions in the transfer of electrons from NADH to the respiratory chain. The immediate electron acceptor for the enzyme is believed to be ubiquinone. The polypeptide is NADH-ubiquinone oxidoreductase chain 4 (MT-ND4) (Latimeria chalumnae (Coelacanth)).